Here is a 587-residue protein sequence, read N- to C-terminus: Pescadillo homolog (587 aa).

The stretch at L267–N306 forms a coiled coil. The segment at I290–E311 is disordered. Residues E295–E311 are compositionally biased toward acidic residues. A BRCT domain is found at S335–A434. The interval T437 to N587 is disordered. Acidic residues predominate over residues K459–D494. The stretch at E470–N587 forms a coiled coil. Composition is skewed to basic and acidic residues over residues S529 to K541, I559 to L569, and K578 to N587.

The protein belongs to the pescadillo family. As to quaternary structure, component of the NOP7 complex, composed of ERB1, NOP7 and YTM1. The complex is held together by ERB1, which interacts with NOP7 via its N-terminal domain and with YTM1 via a high-affinity interaction between the seven-bladed beta-propeller domains of the 2 proteins. The NOP7 complex associates with the 66S pre-ribosome.

Its subcellular location is the nucleus. The protein localises to the nucleolus. It localises to the nucleoplasm. Its function is as follows. Component of the NOP7 complex, which is required for maturation of the 25S and 5.8S ribosomal RNAs and formation of the 60S ribosome. Required for the transition from hyphal to yeast growth. This Candida albicans (strain SC5314 / ATCC MYA-2876) (Yeast) protein is Pescadillo homolog.